Here is a 159-residue protein sequence, read N- to C-terminus: Protein Smg homolog (159 aa).

Belongs to the Smg family.

This Vibrio campbellii (strain ATCC BAA-1116) protein is Protein Smg homolog.